Here is a 282-residue protein sequence, read N- to C-terminus: Aquaporin PIP-type (282 aa).

The next 2 helical transmembrane spans lie at 39-61 and 74-96; these read WRAAIAEFIATLLFLYITVATVI and GLLGIAWSFGGMIFVLVYCTAGI. Residues 102–104 carry the NPA 1 motif; the sequence is NPA. A run of 4 helical transmembrane segments spans residues 116–138, 159–181, 201–223, and 243–265; these read SLLRALVYMIAQCAGAICGVGLV, GYNKGTAFGAELIGTFVLVYTVF, LPIGFAVFMVHLATIPITGTGIN, and HWIFWVGPFVGALAAAAYHQYVL. An NPA 2 motif is present at residues 223 to 225; it reads NPA.

The protein belongs to the MIP/aquaporin (TC 1.A.8) family. PIP (TC 1.A.8.11) subfamily.

The protein localises to the membrane. Functionally, water-specific channel. The polypeptide is Aquaporin PIP-type (Atriplex canescens (Fourwing saltbush)).